The primary structure comprises 369 residues: Delta(12)-oleate desaturase (369 aa).

2 helical membrane-spanning segments follow: residues 41–61 (LLSD…YFPL) and 69–89 (IAWP…WVIA). A Histidine box-1 motif is present at residues 90–94 (HECGH). Residues 102-122 (LIDDIVGLFFHSALLVPYFSW) form a helical membrane-spanning segment. The short motif at 126 to 130 (HRRHH) is the Histidine box-2 element. The next 3 membrane-spanning stretches (helical) occupy residues 164-184 (LISL…FNMS), 207-227 (WIQV…LYRI), and 234-254 (FWVM…LVLI). The Histidine box-3 signature appears at 300 to 304 (HVVHH).

It belongs to the fatty acid desaturase type 1 family.

It localises to the membrane. It functions in the pathway lipid metabolism; polyunsaturated fatty acid biosynthesis. Delta(12)-fatty acid desaturase producing in a heterologous system linoleic acid (18:2(9Z,12Z)) and to a lower extent hexadecadienoic acid (16:2(9Z,12Z)). The sequence is that of Delta(12)-oleate desaturase from Trichosanthes kirilowii (Chinese snake gourd).